Here is a 395-residue protein sequence, read N- to C-terminus: N5-carboxyaminoimidazole ribonucleotide synthase (395 aa).

ATP-binding positions include Lys-109, Lys-149, 184–187, Glu-192, and 268–269; these read EEFI and NE. Residues 113–298 form the ATP-grasp domain; the sequence is RQLLTRLGLP…QFEQQLRAIA (186 aa).

It belongs to the PurK/PurT family. Homodimer.

The enzyme catalyses 5-amino-1-(5-phospho-beta-D-ribosyl)imidazole + hydrogencarbonate + ATP = 5-carboxyamino-1-(5-phospho-D-ribosyl)imidazole + ADP + phosphate + 2 H(+). Its pathway is purine metabolism; IMP biosynthesis via de novo pathway; 5-amino-1-(5-phospho-D-ribosyl)imidazole-4-carboxylate from 5-amino-1-(5-phospho-D-ribosyl)imidazole (N5-CAIR route): step 1/2. In terms of biological role, catalyzes the ATP-dependent conversion of 5-aminoimidazole ribonucleotide (AIR) and HCO(3)(-) to N5-carboxyaminoimidazole ribonucleotide (N5-CAIR). The polypeptide is N5-carboxyaminoimidazole ribonucleotide synthase (Synechococcus elongatus (strain ATCC 33912 / PCC 7942 / FACHB-805) (Anacystis nidulans R2)).